Consider the following 180-residue polypeptide: Oligoribonuclease (180 aa).

The region spanning 7–170 is the Exonuclease domain; that stretch reads LIWIDLEMTG…DDIRESLAEL (164 aa). The active site involves tyrosine 128.

It belongs to the oligoribonuclease family.

The protein resides in the cytoplasm. In terms of biological role, 3'-to-5' exoribonuclease specific for small oligoribonucleotides. In Pectobacterium atrosepticum (strain SCRI 1043 / ATCC BAA-672) (Erwinia carotovora subsp. atroseptica), this protein is Oligoribonuclease.